The chain runs to 889 residues: Cytoplasmic aconitate hydratase (889 aa).

Substrate is bound by residues glutamine 86 and 205–207 (DSH). Residues cysteine 437, cysteine 503, and cysteine 506 each coordinate [4Fe-4S] cluster. Substrate is bound by residues arginine 536, arginine 541, arginine 699, and 779-780 (SR).

The protein belongs to the aconitase/IPM isomerase family. [4Fe-4S] cluster serves as cofactor.

It localises to the cytoplasm. It is found in the cytosol. The catalysed reaction is citrate = D-threo-isocitrate. Functionally, bifunctional iron sensor that switches between 2 activities depending on iron availability. Iron deprivation, promotes its mRNA binding activity through which it regulates the expression of genes involved in iron uptake, sequestration and utilization. Binds to iron-responsive elements (IRES) in the untranslated region of target mRNAs preventing for instance the translation of ferritin and aminolevulinic acid synthase and stabilizing the transferrin receptor mRNA. In terms of biological role, conversely, when cellular iron levels are high, binds a 4Fe-4S cluster which precludes RNA binding activity and promotes the aconitase activity, the isomerization of citrate to isocitrate via cis-aconitate. The protein is Cytoplasmic aconitate hydratase (ACO1) of Gallus gallus (Chicken).